We begin with the raw amino-acid sequence, 56 residues long: uncharacterized protein (56 aa).

The chain crosses the membrane as a helical span at residues 12–32 (GITLFPYFAILILILAILVVG). The tract at residues 19–31 (FAILILILAILVV) is hydrophobic.

It localises to the membrane. This is an uncharacterized protein from Chenopodium amaranticolor (Quinoa).